The following is a 233-amino-acid chain: uncharacterized protein (233 aa).

Belongs to the RHS family.

This is an uncharacterized protein from Escherichia coli (strain K12).